A 740-amino-acid chain; its full sequence is Catalase-peroxidase (740 aa).

The span at 1 to 16 shows a compositional bias: basic and acidic residues; that stretch reads MSENHDAIVTDAKTEE. The tract at residues 1–38 is disordered; the sequence is MSENHDAIVTDAKTEETDGCPVAHGRAPHPTQGGGNRQ. A cross-link (tryptophyl-tyrosyl-methioninium (Trp-Tyr) (with M-257)) is located at residues 108–231; the sequence is WHSAGTYRIS…LGAVQMGLIY (124 aa). His-109 acts as the Proton acceptor in catalysis. A cross-link (tryptophyl-tyrosyl-methioninium (Tyr-Met) (with W-108)) is located at residues 231-257; that stretch reads YVNPEGPNGNPDPIAAARDIRETFRRM. His-272 provides a ligand contact to heme b.

The protein belongs to the peroxidase family. Peroxidase/catalase subfamily. As to quaternary structure, homodimer. The cofactor is heme b. In terms of processing, formation of the three residue Trp-Tyr-Met cross-link is important for the catalase, but not the peroxidase activity of the enzyme.

It catalyses the reaction H2O2 + AH2 = A + 2 H2O. The enzyme catalyses 2 H2O2 = O2 + 2 H2O. Functionally, bifunctional enzyme with both catalase and broad-spectrum peroxidase activity. The protein is Catalase-peroxidase of Streptomyces coelicolor (strain ATCC BAA-471 / A3(2) / M145).